A 391-amino-acid chain; its full sequence is Serine protease 7 (391 aa).

The first 27 residues, 1-27 (MKSTRKVVGIFLATCLLPFTVLQNVAA), serve as a signal peptide directing secretion. The propeptide at 28-136 (QGSCRNPNQK…KCGPHSFSNK (109 aa)) is activation peptide. The Clip domain maps to 30 to 84 (SCRNPNQKQGQCLSIYDCQSLLSVIQQSYVSPEDRTFLRNSQCLDGVGRQPYVCC). 3 disulfide bridges follow: cysteine 31–cysteine 83, cysteine 41–cysteine 72, and cysteine 47–cysteine 84. A disordered region spans residues 91-121 (GSQEATSAAPPPTTTSSSSRGQDGQAGLGNL). Cystine bridges form between cysteine 128–cysteine 264, cysteine 167–cysteine 183, cysteine 211–cysteine 216, cysteine 310–cysteine 327, and cysteine 337–cysteine 366. The Peptidase S1 domain maps to 137-390 (VYNGNDTAID…YMDWIVETIR (254 aa)). N-linked (GlcNAc...) asparagine glycosylation is present at asparagine 141. Histidine 182 (charge relay system) is an active-site residue. Glutamate 202, aspartate 204, lysine 207, and aspartate 210 together coordinate Ca(2+). Aspartate 244 (charge relay system) is an active-site residue. Catalysis depends on serine 341, which acts as the Charge relay system.

This sequence belongs to the peptidase S1 family. CLIP subfamily. As to quaternary structure, interacts with Spn27A.

The protein localises to the secreted. Its function is as follows. Serine protease that, by cleaving and activating prophenoloxidase (PPO1) after immune challenge, plays an essential role in the melanization immune response to septic wounding. May function in diverse Hayan-dependent PPO1-activating cascades that are negatively controlled by different serpin proteins; Spn27A in the hemolymph and Spn77BA in the trachea. Important for the innate immune response to fungi. Regulation of melanization and PPO1 activation appears to be largely independent of the Toll signaling pathway. The protein is Serine protease 7 of Drosophila melanogaster (Fruit fly).